The sequence spans 327 residues: Phosphate acyltransferase (327 aa).

The protein belongs to the PlsX family. In terms of assembly, homodimer. Probably interacts with PlsY.

It localises to the cytoplasm. The catalysed reaction is a fatty acyl-[ACP] + phosphate = an acyl phosphate + holo-[ACP]. It functions in the pathway lipid metabolism; phospholipid metabolism. In terms of biological role, catalyzes the reversible formation of acyl-phosphate (acyl-PO(4)) from acyl-[acyl-carrier-protein] (acyl-ACP). This enzyme utilizes acyl-ACP as fatty acyl donor, but not acyl-CoA. This Thermosipho africanus (strain TCF52B) protein is Phosphate acyltransferase.